A 465-amino-acid polypeptide reads, in one-letter code: Ribulose bisphosphate carboxylase large chain (465 aa).

Residue K4 is modified to N6,N6,N6-trimethyllysine. 2 residues coordinate substrate: N113 and T163. K165 (proton acceptor) is an active-site residue. Residue K167 coordinates substrate. K191, D193, and E194 together coordinate Mg(2+). At K191 the chain carries N6-carboxylysine. H284 acts as the Proton acceptor in catalysis. Substrate-binding residues include R285, H317, and S369.

The protein belongs to the RuBisCO large chain family. Type I subfamily. In terms of assembly, heterohexadecamer of 8 large chains and 8 small chains; disulfide-linked. The disulfide link is formed within the large subunit homodimers. Requires Mg(2+) as cofactor. In terms of processing, the disulfide bond which can form in the large chain dimeric partners within the hexadecamer appears to be associated with oxidative stress and protein turnover.

The protein resides in the plastid. It is found in the chloroplast. It carries out the reaction 2 (2R)-3-phosphoglycerate + 2 H(+) = D-ribulose 1,5-bisphosphate + CO2 + H2O. It catalyses the reaction D-ribulose 1,5-bisphosphate + O2 = 2-phosphoglycolate + (2R)-3-phosphoglycerate + 2 H(+). RuBisCO catalyzes two reactions: the carboxylation of D-ribulose 1,5-bisphosphate, the primary event in carbon dioxide fixation, as well as the oxidative fragmentation of the pentose substrate in the photorespiration process. Both reactions occur simultaneously and in competition at the same active site. This is Ribulose bisphosphate carboxylase large chain from Dillenia indica (Elephant apple).